A 398-amino-acid polypeptide reads, in one-letter code: Putative F-box/kelch-repeat protein At2g29780 (398 aa).

Residues 1 to 46 are disordered; that stretch reads MAIISETSDDGSHGGVPNKKPEELHKNPKEDDHQEEEVENHPPIPR. Residues 19–32 are compositionally biased toward basic and acidic residues; sequence KKPEELHKNPKEDD. The F-box domain maps to 43-90; that stretch reads PIPRQIPQALIRRTVALIKRCHYPSLSLLSKAFRIVISSPELHQTRSS. Kelch repeat units follow at residues 148 to 195, 196 to 241, 243 to 289, and 295 to 342; these read KMYV…VING, KIYV…GFVT, VVMQ…VIED, and DPYC…GGKL.

In Arabidopsis thaliana (Mouse-ear cress), this protein is Putative F-box/kelch-repeat protein At2g29780.